The following is a 135-amino-acid chain: Lymphocyte antigen 6B (135 aa).

Positions Met1 to Gly26 are cleaved as a signal peptide. The UPAR/Ly6 domain maps to Leu27–Ala119. Disulfide bonds link Cys29–Cys54, Cys32–Cys41, Cys47–Cys75, Cys79–Cys99, and Cys100–Cys105. Residue Gly113 is the site of GPI-anchor amidated glycine attachment. Positions Ser114–Leu135 are cleaved as a propeptide — removed in mature form.

The protein resides in the cell membrane. This chain is Lymphocyte antigen 6B (Ly6b), found in Rattus norvegicus (Rat).